The sequence spans 208 residues: MAQLSAQRRMKLMALQLLLWQSALWSGREAVPLVTVSALPPSLPLPRSFLLKSLEQVRKIQASGSVLLEQLCATYKLCHPEELVLLGHSLGIPKASLSGCSSQALQQTQCLSQLHSGLCLYQGLLQALSGISPALAPTLDLLQLDVANFATTIWQQMENLGVAPTVQPTQSAMPAFTSAFQRRAGGVLAISYLQGFLETARLALHHLA.

The N-terminal stretch at 1–30 (MAQLSAQRRMKLMALQLLLWQSALWSGREA) is a signal peptide. Disulfide bonds link Cys72–Cys78 and Cys100–Cys110. The O-linked (GalNAc...) threonine glycan is linked to Thr169.

The protein belongs to the IL-6 superfamily. As to quaternary structure, monomer. Post-translationally, O-glycosylated.

It localises to the secreted. In terms of biological role, granulocyte/macrophage colony-stimulating factors are cytokines that act in hematopoiesis by controlling the production, differentiation, and function of 2 related white cell populations of the blood, the granulocytes and the monocytes-macrophages. This CSF induces granulocytes. This is Granulocyte colony-stimulating factor (Csf3) from Mus musculus (Mouse).